A 241-amino-acid chain; its full sequence is Ribonuclease 3 (241 aa).

An RNase III domain is found at histidine 16–glycine 144. Residue glutamate 57 coordinates Mg(2+). Catalysis depends on residues aspartate 61 and glutamate 133. Glutamate 133 provides a ligand contact to Mg(2+). The 70-residue stretch at aspartate 171–serine 240 folds into the DRBM domain.

This sequence belongs to the ribonuclease III family. As to quaternary structure, homodimer. Mg(2+) serves as cofactor.

It localises to the cytoplasm. The catalysed reaction is Endonucleolytic cleavage to 5'-phosphomonoester.. Functionally, digests double-stranded RNA. Involved in the processing of primary rRNA transcript to yield the immediate precursors to the large and small rRNAs (23S and 16S). Processes some mRNAs, and tRNAs when they are encoded in the rRNA operon. Processes pre-crRNA and tracrRNA of type II CRISPR loci if present in the organism. This chain is Ribonuclease 3, found in Desulfotalea psychrophila (strain LSv54 / DSM 12343).